The primary structure comprises 267 residues: Kallikrein-14 (267 aa).

The N-terminal stretch at M1–S34 is a signal peptide. The propeptide at Q35–K40 is activation peptide. Residues I41–R265 form the Peptidase S1 domain. 5 disulfides stabilise this stretch: C47–C180, C68–C84, C159–C226, C191–C205, and C216–C241. Active-site charge relay system residues include H83 and D127. S220 (charge relay system) is an active-site residue.

This sequence belongs to the peptidase S1 family. Kallikrein subfamily. Proteolytic cleavage of the activation peptide produces the active enzyme. Highly expressed in CNS, bone marrow and fetal liver. Also expressed in breast, thyroid, kidney, colon, pancreas, spleen, prostate, uterus, small intestine, placenta and skeletal muscle. Among 40 tissues tested, the highest expression is detected in skin followed by breast and prostate (at protein level). Expressed in stratum corneum by sweat ducts and sweat glands and detected in sweat (at protein level).

The protein resides in the secreted. It localises to the extracellular space. With respect to regulation, inhibited by SERPINA1, SERPINC1, SERPINE1, SERPINF2, aprotinin, soybean, trypsin inhibitor and leupeptin. Inhibited by serine protease inhibitor SPINK5. Has an autoproteolytic activity which may have a regulatory effect. Activated by citrate and inhibited by zinc and to a lower extent by manganese. In terms of biological role, serine-type endopeptidase with a dual trypsin-like and chymotrypsin-like substrate specificity. May activate/inactivate the proteinase-activated receptors F2R, F2RL1 and F2RL3 and other kallikreins including KLK1, KLK3, KLK5 and KLK11. May function in seminal clot liquefaction through direct cleavage of the semenogelin SEMG1 and SEMG2 and activation of KLK3. May function through desmoglein DSG1 cleavage in epidermal desquamation a process by which the most superficial corneocytes are shed from the skin surface. May be involved in several aspects of tumor progression including growth, invasion and angiogenesis. This is Kallikrein-14 (KLK14) from Homo sapiens (Human).